The following is a 156-amino-acid chain: RNA polymerase sigma factor SigS (156 aa).

Positions 29-44 match the Polymerase core binding motif; that stretch reads EYYQLLLIKMWQLSQI. Positions 126–145 form a DNA-binding region, H-T-H motif; the sequence is QYEIADIMSLSTSTIKLIKA.

This sequence belongs to the sigma-70 factor family.

Functionally, sigma factors are initiation factors that promote the attachment of RNA polymerase to specific initiation sites and are then released. Sigma-S contributes to the protection against external stress, thus playing a role in cellular fitness and survival. The polypeptide is RNA polymerase sigma factor SigS (sigS) (Staphylococcus aureus (strain MRSA252)).